We begin with the raw amino-acid sequence, 273 residues long: WAP four-disulfide core domain protein 8 (273 aa).

The chain crosses the membrane as a helical span at residues 45–65 (LAHSWWSGALLLLLLFLFLSL). The region spanning 76-123 (IKQKVGECPRQRLECRNESLSSCKTDFNCKAHFKCCQFACGRKCMDPY) is the WAP 1 domain. 15 disulfide bridges follow: Cys83–Cys111, Cys90–Cys115, Cys98–Cys110, Cys104–Cys119, Cys127–Cys177, Cys136–Cys160, Cys152–Cys173, Cys186–Cys214, Cys197–Cys218, Cys201–Cys213, Cys207–Cys222, Cys233–Cys261, Cys240–Cys264, Cys248–Cys260, and Cys254–Cys268. Positions 127–177 (CMLPSDKGNCQDILTRWYFDSQKHQCRAFLYSGCRGNANNFLTKTDCRNAC) constitute a BPTI/Kunitz inhibitor domain. WAP domains are found at residues 179-226 (FVEK…ARVW) and 228-272 (VKTG…LKPR).

Its subcellular location is the membrane. The sequence is that of WAP four-disulfide core domain protein 8 (Wfdc8) from Mus musculus (Mouse).